The chain runs to 513 residues: 2-isopropylmalate synthase (513 aa).

A Pyruvate carboxyltransferase domain is found at 4 to 268 (IKIFDTTLRD…ETGIRTELIY (265 aa)). The Mn(2+) site is built by Asp13, His203, His205, and Asn239. Positions 392 to 513 (RLVHFHVHTG…GLLRKNGGVE (122 aa)) are regulatory domain.

It belongs to the alpha-IPM synthase/homocitrate synthase family. LeuA type 1 subfamily. As to quaternary structure, homodimer. It depends on Mn(2+) as a cofactor.

The protein localises to the cytoplasm. It carries out the reaction 3-methyl-2-oxobutanoate + acetyl-CoA + H2O = (2S)-2-isopropylmalate + CoA + H(+). Its pathway is amino-acid biosynthesis; L-leucine biosynthesis; L-leucine from 3-methyl-2-oxobutanoate: step 1/4. Functionally, catalyzes the condensation of the acetyl group of acetyl-CoA with 3-methyl-2-oxobutanoate (2-ketoisovalerate) to form 3-carboxy-3-hydroxy-4-methylpentanoate (2-isopropylmalate). The chain is 2-isopropylmalate synthase from Thermotoga neapolitana (strain ATCC 49049 / DSM 4359 / NBRC 107923 / NS-E).